The following is a 187-amino-acid chain: Probable RNA 2'-phosphotransferase (187 aa).

This sequence belongs to the KptA/TPT1 family.

In terms of biological role, removes the 2'-phosphate from RNA via an intermediate in which the phosphate is ADP-ribosylated by NAD followed by a presumed transesterification to release the RNA and generate ADP-ribose 1''-2''-cyclic phosphate (APPR&gt;P). May function as an ADP-ribosylase. The chain is Probable RNA 2'-phosphotransferase from Pseudomonas syringae pv. tomato (strain ATCC BAA-871 / DC3000).